We begin with the raw amino-acid sequence, 61 residues long: Weak toxin CM-1c (61 aa).

Cystine bridges form between C3-C21, C14-C37, C41-C53, and C54-C59.

The protein belongs to the three-finger toxin family. Short-chain subfamily. Orphan group VI sub-subfamily. As to expression, expressed by the venom gland.

It localises to the secreted. The chain is Weak toxin CM-1c from Hemachatus haemachatus (Rinkhals).